A 423-amino-acid chain; its full sequence is AP-1 complex subunit mu-2 (423 aa).

One can recognise an MHD domain in the interval 168 to 421 (KNEVFIDVIE…ITQSGDYQLR (254 aa)).

Belongs to the adaptor complexes medium subunit family. In terms of assembly, adaptor protein complex 1 (AP-1) is a heterotetramer composed of two large adaptins (gamma-type subunit AP1G1 and beta-type subunit AP1B1), a medium adaptin (mu-type subunit AP1M1 or AP1M2) and a small adaptin (sigma-type subunit AP1S1 or AP1S2 or AP1S3). Interacts with P2X4. In terms of processing, phosphorylation of membrane-bound AP1M1/AP1M2 increases its affinity for sorting signals.

It is found in the golgi apparatus. Its subcellular location is the cytoplasmic vesicle. The protein resides in the clathrin-coated vesicle membrane. Functionally, subunit of clathrin-associated adaptor protein complex 1 that plays a role in protein sorting in the trans-Golgi network (TGN) and endosomes. The AP complexes mediate the recruitment of clathrin to membranes and the recognition of sorting signals within the cytosolic tails of transmembrane cargo molecules. This Homo sapiens (Human) protein is AP-1 complex subunit mu-2 (AP1M2).